Consider the following 246-residue polypeptide: TVP38/TMEM64 family membrane protein MT0653 (246 aa).

5 consecutive transmembrane segments (helical) span residues 19–39 (LVVF…TDVI), 57–77 (LTYV…PILA), 83–103 (LFGP…TAVV), 157–177 (AFGT…IGSA), and 196–216 (LLAS…AFAA).

It belongs to the TVP38/TMEM64 family.

It localises to the cell membrane. The sequence is that of TVP38/TMEM64 family membrane protein MT0653 from Mycobacterium tuberculosis (strain CDC 1551 / Oshkosh).